Here is a 190-residue protein sequence, read N- to C-terminus: MPPIKENVIIYANPDHCLSCHSCELACAVAHSGGHDMIEAIAANLPLHARNKVVSVDGTAMPMQCRQCEDAPCTFACPTGACRQADGQVQIVEQHCIGCKLCVMVCPFGAITVRSETVVEQGACTNRGVAKKCDLCVDWRASTGKTAPACVEACPTKAIRMVDLDAYRIALREARAREIAKSHRHMRVQF.

The 29-residue stretch at 8-36 (VIIYANPDHCLSCHSCELACAVAHSGGHD) folds into the 4Fe-4S ferredoxin-type 1 domain. Residues Cys17, Cys20, Cys23, Cys27, Cys65, Cys68, Cys73, Cys77, Cys96, Cys99, Cys102, Cys106, Cys133, Cys136, Cys150, and Cys154 each contribute to the [4Fe-4S] cluster site. 4Fe-4S ferredoxin-type domains are found at residues 87-116 (GQVQ…VRSE) and 133-164 (CDLC…MVDL).

Its function is as follows. The carbon monoxide dehydrogenase (CODH) oxidizes carbon monoxide coupled, via CooF, to the reduction of a hydrogen cation by a hydrogenase (probably CooH). CooF is required in stoichiometric amounts in vitro for anchoring CODH to the membrane as well as for conveying the electrons to the hydrogenase. This chain is Iron-sulfur protein (cooF), found in Rhodospirillum rubrum.